The following is a 444-amino-acid chain: Phosphoglucosamine mutase (444 aa).

The active-site Phosphoserine intermediate is S102. Positions 102, 239, 241, and 243 each coordinate Mg(2+). S102 carries the post-translational modification Phosphoserine.

It belongs to the phosphohexose mutase family. It depends on Mg(2+) as a cofactor. Activated by phosphorylation.

The enzyme catalyses alpha-D-glucosamine 1-phosphate = D-glucosamine 6-phosphate. Functionally, catalyzes the conversion of glucosamine-6-phosphate to glucosamine-1-phosphate. This Saccharopolyspora erythraea (strain ATCC 11635 / DSM 40517 / JCM 4748 / NBRC 13426 / NCIMB 8594 / NRRL 2338) protein is Phosphoglucosamine mutase.